The sequence spans 217 residues: tRNA (guanine-N(7)-)-methyltransferase (217 aa).

Residues glutamate 44, glutamate 69, aspartate 96, and aspartate 118 each coordinate S-adenosyl-L-methionine. Aspartate 118 is an active-site residue. Substrate-binding positions include lysine 122, aspartate 154, and threonine 191–glutamate 194.

The protein belongs to the class I-like SAM-binding methyltransferase superfamily. TrmB family.

The catalysed reaction is guanosine(46) in tRNA + S-adenosyl-L-methionine = N(7)-methylguanosine(46) in tRNA + S-adenosyl-L-homocysteine. The protein operates within tRNA modification; N(7)-methylguanine-tRNA biosynthesis. Its function is as follows. Catalyzes the formation of N(7)-methylguanine at position 46 (m7G46) in tRNA. This Bacillus cereus (strain G9842) protein is tRNA (guanine-N(7)-)-methyltransferase.